We begin with the raw amino-acid sequence, 520 residues long: Peptidoglycan-recognition protein LC (520 aa).

Composition is skewed to polar residues over residues 1 to 14 (MPFSNETEMSQCSN) and 27 to 36 (KNCSTSSTDS). Disordered stretches follow at residues 1 to 78 (MPFS…RISV) and 239 to 278 (DKWKPGEGPAGGQDNPAFNGGPSTNGSAPGSKHEDPAQTP). Topologically, residues 1-291 (MPFSNETEMS…PFLPNTVGRK (291 aa)) are cytoplasmic. 2 stretches are compositionally biased toward basic and acidic residues: residues 48–58 (RPEKETKDRGT) and 66–78 (KSEEKTESKRISV). Residues 292–312 (AVTVTVVFVTLTFLLGIVLAT) form a helical; Signal-anchor for type II membrane protein membrane-spanning segment. Over 313–520 (TTNLFGKTLN…ASFANWTHWS (208 aa)) the chain is Extracellular. Asn389 carries N-linked (GlcNAc...) asparagine glycosylation. Cys390 and Cys396 are oxidised to a cystine. The N-acetylmuramoyl-L-alanine amidase domain maps to 412 to 490 (QKCDIAYNFL…KLGKIAPSYR (79 aa)). Asn515 is a glycosylation site (N-linked (GlcNAc...) asparagine).

This sequence belongs to the N-acetylmuramoyl-L-alanine amidase 2 family. In terms of processing, proteolytically cleaved, probably by a metaloprotease such as Mmp2; proteolytic cleavage leads to activation of the imd/Relish signaling pathway. Expressed in the fat body and hemocytes.

The protein resides in the membrane. Its activity is regulated as follows. Activated by proteolytic cleavage in response to Gram-negative bacterial infection; cleavage may be mediated by endogenous proteases, such as the metalloprotease Mmp2 or elastase, or by bacterially expressed proteases such as the surface serine protease OmpT. In terms of biological role, major activator of the imd/Relish pathway and is likely to encode a pattern recognition molecule for the humoral immune response. Required for Relish processing and nuclear translocation following proteolytic cleavage. Involved in the response to lipopolysaccharide (LPS) and peptidoglycan of Gram-negative bacteria. The different isoforms probably display different recognition capabilities to various microbial patterns. Its function is as follows. Mediates the response to LPS and Gram-negative bacteria. Mediates the response to LPS, peptidoglycan and Gram-negative bacteria. This is Peptidoglycan-recognition protein LC (PGRP-LC) from Drosophila melanogaster (Fruit fly).